A 394-amino-acid polypeptide reads, in one-letter code: 3-phenylpropionate/cinnamic acid dioxygenase ferredoxin--NAD(+) reductase component (394 aa).

FAD is bound at residue 5 to 36 (TFIIVGAGQAGAMAAATLRQQQFDGDIILIGK). Position 146–174 (146–174 (RILIVGGGVIGLELAATSCELGANVTVIE)) interacts with NAD(+).

The protein belongs to the bacterial ring-hydroxylating dioxygenase ferredoxin reductase family. This dioxygenase system consists of four proteins: the two subunits of the hydroxylase component (HcaE and HcaF), a ferredoxin (HcaC) and a ferredoxin reductase (HcaD). FAD is required as a cofactor.

The enzyme catalyses 2 reduced [2Fe-2S]-[ferredoxin] + NAD(+) + H(+) = 2 oxidized [2Fe-2S]-[ferredoxin] + NADH. It participates in aromatic compound metabolism; 3-phenylpropanoate degradation. Part of the multicomponent 3-phenylpropionate dioxygenase, that converts 3-phenylpropionic acid (PP) and cinnamic acid (CI) into 3-phenylpropionate-dihydrodiol (PP-dihydrodiol) and cinnamic acid-dihydrodiol (CI-dihydrodiol), respectively. This is 3-phenylpropionate/cinnamic acid dioxygenase ferredoxin--NAD(+) reductase component from Photorhabdus laumondii subsp. laumondii (strain DSM 15139 / CIP 105565 / TT01) (Photorhabdus luminescens subsp. laumondii).